We begin with the raw amino-acid sequence, 68 residues long: Large ribosomal subunit protein uL29 (68 aa).

It belongs to the universal ribosomal protein uL29 family.

The sequence is that of Large ribosomal subunit protein uL29 from Rhodopseudomonas palustris (strain BisB18).